A 233-amino-acid polypeptide reads, in one-letter code: 2-C-methyl-D-erythritol 4-phosphate cytidylyltransferase (233 aa).

The protein belongs to the IspD/TarI cytidylyltransferase family. IspD subfamily.

The catalysed reaction is 2-C-methyl-D-erythritol 4-phosphate + CTP + H(+) = 4-CDP-2-C-methyl-D-erythritol + diphosphate. The protein operates within isoprenoid biosynthesis; isopentenyl diphosphate biosynthesis via DXP pathway; isopentenyl diphosphate from 1-deoxy-D-xylulose 5-phosphate: step 2/6. In terms of biological role, catalyzes the formation of 4-diphosphocytidyl-2-C-methyl-D-erythritol from CTP and 2-C-methyl-D-erythritol 4-phosphate (MEP). The protein is 2-C-methyl-D-erythritol 4-phosphate cytidylyltransferase of Geotalea uraniireducens (strain Rf4) (Geobacter uraniireducens).